The primary structure comprises 105 residues: DRDAQTLTDERSDQGDGNFRYEFETSNGIYTQKTGTPGSEGQSNYQGSFRFTLEDGTIAEVTYIADENGFQPSSDLLPVGPPAPPHVQRLLEIAAEQRAQGITFD.

Residues Asp-1–Tyr-21 are disordered. In terms of domain architecture, Chitin-binding type R&amp;R spans Asp-16 to Pro-81.

In terms of tissue distribution, arthrodial membrane.

The sequence is that of Cuticle protein AMP1A from Homarus americanus (American lobster).